A 154-amino-acid chain; its full sequence is Prefoldin subunit 2 (154 aa).

A compositionally biased stretch (gly residues) spans 1–18; it reads MAENGGRAGKSSGSGTGK. 2 disordered regions span residues 1–20 and 124–154; these read MAEN…GKGA and IRLM…VLVS. Positions 124–139 are enriched in basic and acidic residues; sequence IRLMGEDEKPAAKENS. Residues 140-154 show a composition bias toward low complexity; that stretch reads EGAGAKASSAGVLVS.

It belongs to the prefoldin subunit beta family. Heterohexamer of two PFD-alpha type and four PFD-beta type subunits. Component of the PAQosome complex which is responsible for the biogenesis of several protein complexes and which consists of R2TP complex members RUVBL1, RUVBL2, RPAP3 and PIH1D1, URI complex members PFDN2, PFDN6, PDRG1, UXT and URI1 as well as ASDURF, POLR2E and DNAAF10/WDR92. Interacts with URI1; the interaction is phosphorylation-dependent and occurs in a growth-dependent manner.

It is found in the nucleus. It localises to the cytoplasm. The protein resides in the mitochondrion. In terms of biological role, binds specifically to cytosolic chaperonin (c-CPN) and transfers target proteins to it. Binds to nascent polypeptide chain and promotes folding in an environment in which there are many competing pathways for nonnative proteins. The protein is Prefoldin subunit 2 (PFDN2) of Bos taurus (Bovine).